A 168-amino-acid chain; its full sequence is MEHSRFLSCLILAALLSQVNPRILKVLEPEDKVMLECNSSITLLQGTEGQEVSGNNKTRDLGKRIQDPRGMYRCGENTQQLILQVYYRMCQNCVELDTATLAGMIITDIIATVLLALGVYCFAGHETGRFSRAADTQALMGNDQLYQPLRERNDAQYSRLGDKWARNK.

A signal peptide spans M1–P21. The Extracellular portion of the chain corresponds to R22–A102. C37 and C74 are disulfide-bonded. N38 and N56 each carry an N-linked (GlcNAc...) asparagine glycan. The chain crosses the membrane as a helical span at residues G103–A123. The Cytoplasmic portion of the chain corresponds to G124–K168. The ITAM domain occupies D135–K163. Phosphotyrosine occurs at positions 146 and 157.

As to quaternary structure, the TCR-CD3 complex is composed of a CD3D/CD3E and a CD3G/CD3E heterodimers that preferentially associate with TCRalpha and TCRbeta, respectively, to form TCRalpha/CD3E/CD3G and TCRbeta/CD3G/CD3E trimers. In turn, the hexamer interacts with CD3Z homodimer to form the TCR-CD3 complex. Alternatively, TCRalpha and TCRbeta can be replaced by TCRgamma and TCRdelta. Interacts with coreceptors CD4 and CD8. Phosphorylated on Tyr residues after T-cell receptor triggering by LCK in association with CD4/CD8. As to expression, CD3D is mostly present on T-lymphocytes with its TCR-CD3 partners. Present also in fetal NK-cells.

It localises to the cell membrane. Part of the TCR-CD3 complex present on T-lymphocyte cell surface that plays an essential role in adaptive immune response. When antigen presenting cells (APCs) activate T-cell receptor (TCR), TCR-mediated signals are transmitted across the cell membrane by the CD3 chains CD3D, CD3E, CD3G and CD3Z. All CD3 chains contain immunoreceptor tyrosine-based activation motifs (ITAMs) in their cytoplasmic domain. Upon TCR engagement, these motifs become phosphorylated by Src family protein tyrosine kinases LCK and FYN, resulting in the activation of downstream signaling pathways. In addition of this role of signal transduction in T-cell activation, CD3D plays an essential role in thymocyte differentiation. Indeed, participates in correct intracellular TCR-CD3 complex assembly and surface expression. In absence of a functional TCR-CD3 complex, thymocytes are unable to differentiate properly. Interacts with CD4 and CD8 and thus serves to establish a functional link between the TCR and coreceptors CD4 and CD8, which is needed for activation and positive selection of CD4 or CD8 T-cells. The polypeptide is T-cell surface glycoprotein CD3 delta chain (CD3D) (Bos taurus (Bovine)).